Here is a 213-residue protein sequence, read N- to C-terminus: MGNRTEEDYNFVFKVVLIGESGVGKTNLLSRFTRNEFSHDSRTTIGVEFSTRTVMLGTAAIKAQIWDTAGLERYRAITSAYYRGAVGALLVFDLTKHQTYAVVERWLKELYDHAEATIVVMLVGNKSDLHQAREVPTEEARMFAENNGLLFLETSALDSTNVELAFETVLKEIFTKVSKQRQNSTRTNAIALGSAQAGQEPGAGQKRACCISL.

GTP-binding residues include serine 21, glycine 24, lysine 25, threonine 26, asparagine 27, serine 38, histidine 39, threonine 43, and threonine 44. Threonine 26 lines the Mg(2+) pocket. Short sequence motifs (switch) lie at residues 35-49 (NEFS…GVEF) and 67-84 (DTAG…YYRG). Residues threonine 44 and aspartate 67 each coordinate Mg(2+). Residues glycine 70, asparagine 125, lysine 126, aspartate 128, alanine 156, and leucine 157 each coordinate GTP. S-geranylgeranyl cysteine attachment occurs at residues cysteine 209 and cysteine 210. Cysteine 210 is subject to Cysteine methyl ester. A propeptide spans 211-213 (ISL) (removed in mature form).

The protein belongs to the small GTPase superfamily. Rab family. Interacts (GTP-bound form) with RAB11FIP1, RAB11FIP2, RAB11FIP3 and RAB11FIP4. Interacts (via the hypervariable C-terminal region) with ITGB1 (via the cytoplasmic region); the interaction is GTP-dependent. Interacts with ITGAV. Associates with the integrin alpha-V/beta-1 heterodimer. Interacts with VPS33B. Requires Mg(2+) as cofactor.

It localises to the cell membrane. It is found in the cell projection. Its subcellular location is the pseudopodium membrane. The protein localises to the cytoplasmic vesicle. It carries out the reaction GTP + H2O = GDP + phosphate + H(+). Regulated by guanine nucleotide exchange factors (GEFs) which promote the exchange of bound GDP for free GTP. Regulated by GTPase activating proteins (GAPs) which increase the GTP hydrolysis activity. Inhibited by GDP dissociation inhibitors (GDIs) which prevent Rab-GDP dissociation. Its function is as follows. The small GTPases Rab are key regulators of intracellular membrane trafficking, from the formation of transport vesicles to their fusion with membranes. Rabs cycle between an inactive GDP-bound form and an active GTP-bound form that is able to recruit to membranes different set of downstream effectors directly responsible for vesicle formation, movement, tethering and fusion. RAB25 regulates epithelial cell differentiation, proliferation and survival, thereby playing key roles in tumorigenesis. Promotes invasive migration of cells in which it functions to localize and maintain integrin alpha-V/beta-1 at the tips of extending pseudopodia. Involved in the regulation of epithelial morphogenesis through the control of CLDN4 expression and localization at tight junctions. May selectively regulate the apical recycling pathway. Together with MYO5B regulates transcytosis. This chain is Ras-related protein Rab-25 (RAB25), found in Canis lupus familiaris (Dog).